We begin with the raw amino-acid sequence, 361 residues long: Aromatic amino acid aminotransferase (361 aa).

An N6-(pyridoxal phosphate)lysine modification is found at Lys221.

Belongs to the class-II pyridoxal-phosphate-dependent aminotransferase family. As to quaternary structure, homodimer. Pyridoxal 5'-phosphate is required as a cofactor.

The enzyme catalyses an aromatic L-alpha-amino acid + 2-oxoglutarate = an aromatic oxo-acid + L-glutamate. Functionally, aminotransferase that catalyzes the conversion of aromatic amino acids and 2-oxoglutarate into corresponding aromatic oxo acids and L-glutamate. The sequence is that of Aromatic amino acid aminotransferase from Mycobacterium marinum (strain ATCC BAA-535 / M).